Reading from the N-terminus, the 445-residue chain is 3-phosphoshikimate 1-carboxyvinyltransferase (445 aa).

Residues lysine 21, serine 22, and arginine 26 each coordinate 3-phosphoshikimate. Lysine 21 contacts phosphoenolpyruvate. Positions 92 and 120 each coordinate phosphoenolpyruvate. Residues serine 165, glutamine 166, aspartate 307, and lysine 334 each coordinate 3-phosphoshikimate. Glutamine 166 lines the phosphoenolpyruvate pocket. Aspartate 307 (proton acceptor) is an active-site residue. Positions 338, 379, and 405 each coordinate phosphoenolpyruvate.

This sequence belongs to the EPSP synthase family. Monomer.

The protein resides in the cytoplasm. It catalyses the reaction 3-phosphoshikimate + phosphoenolpyruvate = 5-O-(1-carboxyvinyl)-3-phosphoshikimate + phosphate. It participates in metabolic intermediate biosynthesis; chorismate biosynthesis; chorismate from D-erythrose 4-phosphate and phosphoenolpyruvate: step 6/7. In terms of biological role, catalyzes the transfer of the enolpyruvyl moiety of phosphoenolpyruvate (PEP) to the 5-hydroxyl of shikimate-3-phosphate (S3P) to produce enolpyruvyl shikimate-3-phosphate and inorganic phosphate. The sequence is that of 3-phosphoshikimate 1-carboxyvinyltransferase from Chlamydia pneumoniae (Chlamydophila pneumoniae).